Here is a 468-residue protein sequence, read N- to C-terminus: SVGFKAGVKDYKLNYYTPQYQTKDTDILAAFRVTPQPGVPPEERGAAVAAESSTGTWTTVWTDGLTSLDRYKGRCYHIEPVVGEEDQYIAYVAYPLDLFEEGSVTNMFTSIVGNVFGFKALRALRLEDLRIPTSYIKTFQGPPHGIQVERDKLNKYGRPLLGCTIKPKLGLSAKNYGRAVYECLRGGLDFTKDDENVNSQPFMRWRDRFLFCAEALYKAQAETGEIKGHYLNATAGTCEEMIKRAVFARELGVPIVMHDYLTGGFTANTTLAHYCRDNGLLLHIHRAMHAVIDRQKNHGMHFRVLAKALRLSGGDHVHAGTVVGKLEGERDITLGFVDLLRDDFIEKDRSRGIYFTQDWVSLPGVIPVASGGIHVWHMPALTEIFGDDAVLQFGGGTLGHPWGNAPGAVANRVALEACVKARNEGRDLAVEGNEIIREASKWSPELAAACEVWKEIRFNFAAVDTLDP.

K5 carries the post-translational modification N6,N6,N6-trimethyllysine. Substrate contacts are provided by N114 and T164. The active-site Proton acceptor is the K166. K168 is a substrate binding site. Residues K192, D194, and E195 each contribute to the Mg(2+) site. At K192 the chain carries N6-carboxylysine. Residue H285 is the Proton acceptor of the active site. Substrate contacts are provided by R286, H318, and S370.

This sequence belongs to the RuBisCO large chain family. Type I subfamily. In terms of assembly, heterohexadecamer of 8 large chains and 8 small chains; disulfide-linked. The disulfide link is formed within the large subunit homodimers. Mg(2+) serves as cofactor. Post-translationally, the disulfide bond which can form in the large chain dimeric partners within the hexadecamer appears to be associated with oxidative stress and protein turnover.

The protein localises to the plastid. It localises to the chloroplast. The enzyme catalyses 2 (2R)-3-phosphoglycerate + 2 H(+) = D-ribulose 1,5-bisphosphate + CO2 + H2O. The catalysed reaction is D-ribulose 1,5-bisphosphate + O2 = 2-phosphoglycolate + (2R)-3-phosphoglycerate + 2 H(+). Its function is as follows. RuBisCO catalyzes two reactions: the carboxylation of D-ribulose 1,5-bisphosphate, the primary event in carbon dioxide fixation, as well as the oxidative fragmentation of the pentose substrate in the photorespiration process. Both reactions occur simultaneously and in competition at the same active site. This chain is Ribulose bisphosphate carboxylase large chain, found in Catesbaea spinosa.